We begin with the raw amino-acid sequence, 500 residues long: NAD(P)H-quinone oxidoreductase chain 4, chloroplastic (500 aa).

14 consecutive transmembrane segments (helical) span residues 4 to 24 (FPWLTIIVVLPIFAGSLIFFL), 31 to 51 (VIFWYTICISILELLLTTYAF), 84 to 104 (GLSIGPILLTGFITTLATLAA), 111 to 131 (ARLFHFLMLVMYSGQIGLFSC), 134 to 154 (LLLFFLMWEFELIPVYLLLSM), 167 to 187 (FILYTAGGSVFLLMGALGIGL), 212 to 232 (IFYIGFFIAFAVKLPIIPLHT), 242 to 262 (HYSTCMLLAGILLKMGAYGLV), 272 to 292 (AHSLFSPWLMIVGAMQIIYAA), 308 to 328 (SSVSHMGFLIIGIGSITDIGL), 330 to 350 (GALLQIISHGFIGAALFFLAG), 386 to 406 (LALPGMSGFVTEFIVFFGLIT), 411 to 431 (LLMAKILIPFVMAIGIILTPI), and 462 to 482 (LFLSISIFLPILGIGLYPDFV).

Belongs to the complex I subunit 4 family.

Its subcellular location is the plastid. The protein localises to the chloroplast thylakoid membrane. The enzyme catalyses a plastoquinone + NADH + (n+1) H(+)(in) = a plastoquinol + NAD(+) + n H(+)(out). It catalyses the reaction a plastoquinone + NADPH + (n+1) H(+)(in) = a plastoquinol + NADP(+) + n H(+)(out). The sequence is that of NAD(P)H-quinone oxidoreductase chain 4, chloroplastic from Jasminum nudiflorum (Winter jasmine).